A 345-amino-acid polypeptide reads, in one-letter code: Dihydroorotase (345 aa).

Zn(2+)-binding residues include His-13 and His-15. Substrate contacts are provided by residues 15–17 (HLR) and Asn-41. Lys-99, His-136, His-174, and Asp-247 together coordinate Zn(2+). Lys-99 carries the post-translational modification N6-carboxylysine. His-136 contacts substrate. Asp-247 is an active-site residue. Substrate-binding residues include His-251 and Ala-263.

This sequence belongs to the metallo-dependent hydrolases superfamily. DHOase family. Class II DHOase subfamily. As to quaternary structure, homodimer. It depends on Zn(2+) as a cofactor.

The enzyme catalyses (S)-dihydroorotate + H2O = N-carbamoyl-L-aspartate + H(+). Its pathway is pyrimidine metabolism; UMP biosynthesis via de novo pathway; (S)-dihydroorotate from bicarbonate: step 3/3. Catalyzes the reversible cyclization of carbamoyl aspartate to dihydroorotate. The polypeptide is Dihydroorotase (Halorhodospira halophila (strain DSM 244 / SL1) (Ectothiorhodospira halophila (strain DSM 244 / SL1))).